The following is a 678-amino-acid chain: F-box/LRR-repeat protein 5 (678 aa).

Positions 1–159 (MAPFPDEVDL…IKKKVIAQHC (159 aa)) are hemerythrin-like. Positions 15, 57, 58, 61, 80, 126, and 130 each coordinate Fe(3+). Residues 202 to 248 (SSSISSLPPEVMLNIFTYLNPQDLCRCSQVNTEWAQLAKTGSLWRHL) enclose the F-box domain. The disordered stretch occupies residues 285 to 308 (YQEWDEDADIDESEETGEEEDSSI). Over residues 287 to 306 (EWDEDADIDESEETGEEEDS) the composition is skewed to acidic residues. 7 LRR repeats span residues 314–340 (EKELLNSLVHYILPYVGHSVKTLVLAY), 341–366 (SSATSSKVIRQMLEYCPNLEHLDLTQ), 367–392 (TDISDSAFNGWHFGACQTLHHIDLSG), 393–420 (CDKITDLTLEKLSVALGIPSAHKKRLLK), 566–594 (HSDITDCFPGSAKSDQQAARALQFLSLSG), 595–622 (CHQITDHGLRALTIGGGLPKLEHLNLSG), and 623–648 (CLNVTGSGLQDLVATCPSLNDEHFYY). Positions 649, 663, 673, and 674 each coordinate [2Fe-2S] cluster. The stretch at 655 to 678 (PHGATASGCQNLQCGFRMCCRSGE) is one LRR 8 repeat.

Part of a SCF (SKP1-cullin-F-box) protein ligase complex. [2Fe-2S] cluster is required as a cofactor. In terms of processing, ubiquitinated upon iron and oxygen depletion, leading to its degradation by the proteasome. Ubiquitination is regulated by the hemerythrin-like region that acts as an oxygen and iron sensor.

The protein localises to the cytoplasm. It localises to the perinuclear region. It is found in the nucleus. The protein operates within protein modification; protein ubiquitination. Component of some SCF (SKP1-cullin-F-box) protein ligase complex that plays a central role in iron homeostasis by promoting the ubiquitination and subsequent degradation of ireb2/irp2. Upon high iron and oxygen level, it specifically recognizes and binds ireb2/irp2, promoting its ubiquitination and degradation by the proteasome. This chain is F-box/LRR-repeat protein 5 (fbxl5), found in Xenopus laevis (African clawed frog).